Reading from the N-terminus, the 437-residue chain is Epsilon-sarcoglycan (437 aa).

At 1-317 the chain is on the extracellular side; sequence MLLFWWWELG…LKSRDYYTDF (317 aa). Residue asparagine 200 is glycosylated (N-linked (GlcNAc...) asparagine). Residues 318 to 338 form a helical membrane-spanning segment; that stretch reads LVTLAVPSAVALVLFLILAYI. Over 339-437 the chain is Cytoplasmic; sequence MCCRREGVEK…QQQTTGKWYP (99 aa).

This sequence belongs to the sarcoglycan alpha/epsilon family. Post-translationally, N-glycosylated. Ubiquitinated, leading to its degradation by the proteasome. In both neural tissues including cerebellar cortex, striatum, cerebral cortex, thalamus and hippocampus, and non-neural tissues including quadriceps muscle, liver, kidney, spleen, lung, testis and heart. Widely distributed in the brain, with a robust signal obtained from regions with dense neuronal packing such as the pyramidal cell layer of the hippocampus, cerebellar molecular layer, and cerebral cortex. Levels are highest in kidney, moderate in brain and lung, and low in skeletal muscle, liver, spleen and testis.

The protein localises to the cell membrane. Its subcellular location is the sarcolemma. It is found in the cytoplasm. It localises to the cytoskeleton. The protein resides in the cell projection. The protein localises to the dendrite. Its subcellular location is the golgi apparatus. Its function is as follows. Component of the sarcoglycan complex, a subcomplex of the dystrophin-glycoprotein complex which forms a link between the F-actin cytoskeleton and the extracellular matrix. The sequence is that of Epsilon-sarcoglycan from Rattus norvegicus (Rat).